A 240-amino-acid polypeptide reads, in one-letter code: uncharacterized protein (240 aa).

Disordered regions lie at residues 99–121 (EPPT…SPEL) and 136–167 (ATVS…KRVH). Residues 137 to 155 (TVSSPTSPRPITTESSRVS) are compositionally biased toward polar residues.

This is an uncharacterized protein from Ictaluridae (bullhead catfishes).